The primary structure comprises 145 residues: Protein H2A.5 (145 aa).

The disordered stretch occupies residues 118-145 (SPAAAEKEAKSQKAAAKSPKKKTAATKE). Positions 135 to 138 (SPKK) match the SPKK motif motif. The span at 135 to 145 (SPKKKTAATKE) shows a compositional bias: basic residues.

It belongs to the histone H2A family. In terms of assembly, the nucleosome is a histone octamer containing two molecules each of H2A, H2B, H3 and H4 assembled in one H3-H4 heterotetramer and two H2A-H2B heterodimers. The octamer wraps approximately 147 bp of DNA. As to expression, abundant in meristematic tissues.

The protein resides in the nucleus. Its subcellular location is the chromosome. Its function is as follows. Core component of nucleosome. Nucleosomes wrap and compact DNA into chromatin, limiting DNA accessibility to the cellular machineries which require DNA as a template. Histones thereby play a central role in transcription regulation, DNA repair, DNA replication and chromosomal stability. DNA accessibility is regulated via a complex set of post-translational modifications of histones, also called histone code, and nucleosome remodeling. In Triticum aestivum (Wheat), this protein is Protein H2A.5 (H2A-2).